We begin with the raw amino-acid sequence, 71 residues long: uncharacterized protein (71 aa).

At 1 to 16 (MLLLYTVMILTCIIYK) the chain is on the cytoplasmic side. Residues 17–38 (LVPDNKYWPIHMFFFIMIYIVY) form a helical membrane-spanning segment. The Extracellular portion of the chain corresponds to 39–69 (MYEKLDIHEKSQFWNYTMARLSGHPVPTIIC). The N-linked (GlcNAc...) asparagine; by host glycan is linked to Asn-53.

The protein belongs to the asfivirus X69R family.

The protein localises to the host membrane. This is an uncharacterized protein from African swine fever virus (isolate Pig/Kenya/KEN-50/1950) (ASFV).